Consider the following 312-residue polypeptide: Cobalamin biosynthesis protein CobD (312 aa).

4 helical membrane passes run 61-81, 83-103, 152-172, and 292-312; these read IALLLAPFTLAAWALARLPLL, IIVPVALLYLAVGARSLAQHA, DAVFAALFWFLVLGAPGAVLY, and GMWLWAALSLAAAILIGAIHA.

It belongs to the CobD/CbiB family.

It is found in the cell membrane. It participates in cofactor biosynthesis; adenosylcobalamin biosynthesis. Functionally, converts cobyric acid to cobinamide by the addition of aminopropanol on the F carboxylic group. The sequence is that of Cobalamin biosynthesis protein CobD from Chromobacterium violaceum (strain ATCC 12472 / DSM 30191 / JCM 1249 / CCUG 213 / NBRC 12614 / NCIMB 9131 / NCTC 9757 / MK).